Reading from the N-terminus, the 239-residue chain is Probable transcriptional regulatory protein lin0388 (239 aa).

This sequence belongs to the TACO1 family. YeeN subfamily.

It is found in the cytoplasm. This Listeria innocua serovar 6a (strain ATCC BAA-680 / CLIP 11262) protein is Probable transcriptional regulatory protein lin0388.